The chain runs to 155 residues: UPF0060 membrane protein MA_3936 (155 aa).

The next 3 helical transmembrane spans lie at 8–28 (LCPFFLAALFEIRGGYLICLW), 35–55 (AVFGPLGRLMLAVCGIIPTFQ), and 62–82 (VYAAHGGIFIVFSLIWDLFVD).

It belongs to the UPF0060 family.

The protein resides in the cell membrane. The protein is UPF0060 membrane protein MA_3936 of Methanosarcina acetivorans (strain ATCC 35395 / DSM 2834 / JCM 12185 / C2A).